Reading from the N-terminus, the 319-residue chain is Acetyl-coenzyme A carboxylase carboxyl transferase subunit alpha (319 aa).

Residues 39–293 (KLEKKVDRMR…HEAIARQLKE (255 aa)) form the CoA carboxyltransferase C-terminal domain.

This sequence belongs to the AccA family. As to quaternary structure, acetyl-CoA carboxylase is a heterohexamer composed of biotin carboxyl carrier protein (AccB), biotin carboxylase (AccC) and two subunits each of ACCase subunit alpha (AccA) and ACCase subunit beta (AccD).

The protein localises to the cytoplasm. The catalysed reaction is N(6)-carboxybiotinyl-L-lysyl-[protein] + acetyl-CoA = N(6)-biotinyl-L-lysyl-[protein] + malonyl-CoA. Its pathway is lipid metabolism; malonyl-CoA biosynthesis; malonyl-CoA from acetyl-CoA: step 1/1. In terms of biological role, component of the acetyl coenzyme A carboxylase (ACC) complex. First, biotin carboxylase catalyzes the carboxylation of biotin on its carrier protein (BCCP) and then the CO(2) group is transferred by the carboxyltransferase to acetyl-CoA to form malonyl-CoA. The polypeptide is Acetyl-coenzyme A carboxylase carboxyl transferase subunit alpha (Geobacter sulfurreducens (strain ATCC 51573 / DSM 12127 / PCA)).